Reading from the N-terminus, the 335-residue chain is MGENKKVIFSGIQPSGELTIGNYFGAIKNWVKLQDEYDCYYCIVDLHAITVKQEAKDLRRRTLQLIATYIASGIDPEKNTIFIQSHVPAHVQAQWILNCMSYVGELSRMTQFKDKSKKYEDTGIGAGLLNYPVLMAADILIYQADLVPVGKDQTQHIELTRDLAQRFNSTYSETFKIPEGYIPTGGAKIMSLQEPLKKMSKSSDNPNSFILIMDPPEVIKRKIARAVTDNVGVVKYTDDQPGVKNLMNIMSCCTGMSVKDIEDKYEGQGYSKFKEDVADALIQELEPIQNKVNELLKDKAYLQDICKKGAQKASYIANKTVSKMMRKVGFILPEK.

ATP-binding positions include 13–15 and 21–22; these read QPS and GN. Residues 14–22 carry the 'HIGH' region motif; the sequence is PSGELTIGN. Asp138 contributes to the L-tryptophan binding site. ATP is bound by residues 150–152, Ile189, and 198–202; these read GKD and KMSKS. The short motif at 198–202 is the 'KMSKS' region element; sequence KMSKS.

It belongs to the class-I aminoacyl-tRNA synthetase family. Homodimer.

It localises to the cytoplasm. The enzyme catalyses tRNA(Trp) + L-tryptophan + ATP = L-tryptophyl-tRNA(Trp) + AMP + diphosphate + H(+). Catalyzes the attachment of tryptophan to tRNA(Trp). The sequence is that of Tryptophan--tRNA ligase from Clostridium acetobutylicum (strain ATCC 824 / DSM 792 / JCM 1419 / IAM 19013 / LMG 5710 / NBRC 13948 / NRRL B-527 / VKM B-1787 / 2291 / W).